The sequence spans 463 residues: Elongation factor 1-alpha (463 aa).

The tr-type G domain maps to 5–242 (KTHINIVVIG…DAILPPARPT (238 aa)). The G1 stretch occupies residues 14-21 (GHVDSGKS). Residue 14-21 (GHVDSGKS) coordinates GTP. The G2 stretch occupies residues 70–74 (GITID). The G3 stretch occupies residues 91-94 (DAPG). GTP contacts are provided by residues 91–95 (DAPGH) and 153–156 (NKMD). The segment at 153-156 (NKMD) is G4. The tract at residues 194–196 (SGW) is G5. Residues Glu301 and Glu374 each carry the 5-glutamyl glycerylphosphorylethanolamine modification.

This sequence belongs to the TRAFAC class translation factor GTPase superfamily. Classic translation factor GTPase family. EF-Tu/EF-1A subfamily.

It localises to the cytoplasm. Its function is as follows. This protein promotes the GTP-dependent binding of aminoacyl-tRNA to the A-site of ribosomes during protein biosynthesis. The polypeptide is Elongation factor 1-alpha (Bombyx mori (Silk moth)).